A 135-amino-acid chain; its full sequence is Fatty acid-binding protein 5 (135 aa).

The residue at position 2 (alanine 2) is an N-acetylalanine. At lysine 17 the chain carries N6-acetyllysine. A Phosphotyrosine; by Tyr-kinases modification is found at tyrosine 22. The Nuclear localization signal motif lies at 24 to 34 (KEVGVGMALRK). Cysteine 43 and arginine 109 together coordinate N-eicosanoyl ethanolamine. Cysteine 120 and cysteine 127 are joined by a disulfide. 129–131 (RVY) serves as a coordination point for (9Z,12Z)-octadecadienoate. Residue tyrosine 131 coordinates N-eicosanoyl ethanolamine. Residue tyrosine 131 coordinates hexadecanoate. Phosphotyrosine is present on tyrosine 131.

Belongs to the calycin superfamily. Fatty-acid binding protein (FABP) family. In terms of assembly, monomer. Most abundant in lens and retina (found in the mueller cells), moderately abundant in heart and testis (found in the Sertoli cells), and present in very low amounts in lung.

The protein resides in the cytoplasm. It is found in the nucleus. It localises to the synapse. The protein localises to the postsynaptic density. Its subcellular location is the secreted. The enzyme catalyses hexadecanoate(out) = hexadecanoate(in). The catalysed reaction is (9Z,12Z)-octadecadienoate(out) = (9Z,12Z)-octadecadienoate(in). It carries out the reaction (9Z)-octadecenoate(out) = (9Z)-octadecenoate(in). Its function is as follows. Intracellular carrier for long-chain fatty acids and related active lipids, such as endocannabinoids, that regulate the metabolism and actions of the ligands they bind. In addition to the cytosolic transport, selectively delivers specific fatty acids from the cytosol to the nucleus, wherein they activate nuclear receptors. Delivers retinoic acid to the nuclear receptor peroxisome proliferator-activated receptor delta; which promotes proliferation and survival. May also serve as a synaptic carrier of endocannabinoid at central synapses and thus controls retrograde endocannabinoid signaling. Modulates inflammation by regulating PTGES induction via NF-kappa-B activation, and prostaglandin E2 (PGE2) biosynthesis during inflammation. The polypeptide is Fatty acid-binding protein 5 (FABP5) (Bos taurus (Bovine)).